Consider the following 374-residue polypeptide: UDP-N-acetylglucosamine--N-acetylmuramyl-(pentapeptide) pyrophosphoryl-undecaprenol N-acetylglucosamine transferase (374 aa).

UDP-N-acetyl-alpha-D-glucosamine is bound by residues 13-15 (TGG), Asn-124, Arg-165, Ser-193, and Gln-294.

The protein belongs to the glycosyltransferase 28 family. MurG subfamily.

It is found in the cell inner membrane. It catalyses the reaction di-trans,octa-cis-undecaprenyl diphospho-N-acetyl-alpha-D-muramoyl-L-alanyl-D-glutamyl-meso-2,6-diaminopimeloyl-D-alanyl-D-alanine + UDP-N-acetyl-alpha-D-glucosamine = di-trans,octa-cis-undecaprenyl diphospho-[N-acetyl-alpha-D-glucosaminyl-(1-&gt;4)]-N-acetyl-alpha-D-muramoyl-L-alanyl-D-glutamyl-meso-2,6-diaminopimeloyl-D-alanyl-D-alanine + UDP + H(+). Its pathway is cell wall biogenesis; peptidoglycan biosynthesis. Its function is as follows. Cell wall formation. Catalyzes the transfer of a GlcNAc subunit on undecaprenyl-pyrophosphoryl-MurNAc-pentapeptide (lipid intermediate I) to form undecaprenyl-pyrophosphoryl-MurNAc-(pentapeptide)GlcNAc (lipid intermediate II). The sequence is that of UDP-N-acetylglucosamine--N-acetylmuramyl-(pentapeptide) pyrophosphoryl-undecaprenol N-acetylglucosamine transferase from Rhizobium leguminosarum bv. trifolii (strain WSM2304).